Consider the following 149-residue polypeptide: Oocyte-expressed protein homolog (149 aa).

Residues 1 to 23 (MVDDAGTAESQRGKQTPADSLEQ) are disordered. The segment covering 8-18 (AESQRGKQTPA) has biased composition (polar residues). A KH; atypical domain is found at 49–110 (PLVFYLEAWL…SVQNRVKSML (62 aa)).

Belongs to the KHDC1 family. As to quaternary structure, component of the subcortical maternal complex (SCMC), at least composed of NLRP5, KHDC3, OOEP, and TLE6. Within the complex, interacts with NLRP5, KHDC3 and TLE6. As part of the SCMC interacts with the SCMC-associated protein NLRP4F. The SCMC may facilitate translocation of its components between the nuclear and cytoplasmic compartments. Forms a scaffold complex with KHDC3/FILIA, and interacts with BLM and TRIM25 at DNA replication forks.

It is found in the cytoplasm. Its subcellular location is the nucleus. Its function is as follows. Component of the subcortical maternal complex (SCMC), a multiprotein complex that plays a key role in early embryonic development. The SCMC complex is a structural constituent of cytoplasmic lattices, which consist in fibrous structures found in the cytoplasm of oocytes and preimplantation embryos. They are required to store maternal proteins critical for embryonic development, such as proteins that control epigenetic reprogramming of the preimplantation embryo, and prevent their degradation or activation. As part of the OOEP-KHDC3 scaffold, recruits BLM and TRIM25 to DNA replication forks, thereby promoting the ubiquitination of BLM by TRIM25, enhancing BLM retainment at replication forks and therefore promoting stalled replication fork restart. Positively regulates the homologous recombination-mediated DNA double-strand break (DSB) repair pathway by regulating ATM activation and RAD51 recruitment to DSBs in oocytes. Thereby contributes to oocyte survival and the resumption and completion of meiosis. This chain is Oocyte-expressed protein homolog (OOEP), found in Papio anubis (Olive baboon).